We begin with the raw amino-acid sequence, 91 residues long: Small ribosomal subunit protein uS17 (91 aa).

The protein belongs to the universal ribosomal protein uS17 family. Part of the 30S ribosomal subunit.

Functionally, one of the primary rRNA binding proteins, it binds specifically to the 5'-end of 16S ribosomal RNA. The chain is Small ribosomal subunit protein uS17 from Thermobifida fusca (strain YX).